A 97-amino-acid polypeptide reads, in one-letter code: Putative pterin-4-alpha-carbinolamine dehydratase (97 aa).

Belongs to the pterin-4-alpha-carbinolamine dehydratase family.

It carries out the reaction (4aS,6R)-4a-hydroxy-L-erythro-5,6,7,8-tetrahydrobiopterin = (6R)-L-erythro-6,7-dihydrobiopterin + H2O. The polypeptide is Putative pterin-4-alpha-carbinolamine dehydratase (Brucella abortus (strain S19)).